Consider the following 101-residue polypeptide: Small ribosomal subunit protein uS14 (101 aa).

Residues S32–T67 are disordered. A compositionally biased stretch (basic and acidic residues) spans D33–A44.

It belongs to the universal ribosomal protein uS14 family. Part of the 30S ribosomal subunit. Contacts proteins S3 and S10.

Its function is as follows. Binds 16S rRNA, required for the assembly of 30S particles and may also be responsible for determining the conformation of the 16S rRNA at the A site. The polypeptide is Small ribosomal subunit protein uS14 (Paracidovorax citrulli (strain AAC00-1) (Acidovorax citrulli)).